The sequence spans 99 residues: DNA-directed RNA polymerase subunit omega (99 aa).

It belongs to the RNA polymerase subunit omega family. In terms of assembly, the RNAP catalytic core consists of 2 alpha, 1 beta, 1 beta' and 1 omega subunit. When a sigma factor is associated with the core the holoenzyme is formed, which can initiate transcription.

The enzyme catalyses RNA(n) + a ribonucleoside 5'-triphosphate = RNA(n+1) + diphosphate. In terms of biological role, promotes RNA polymerase assembly. Latches the N- and C-terminal regions of the beta' subunit thereby facilitating its interaction with the beta and alpha subunits. The chain is DNA-directed RNA polymerase subunit omega (rpoZ) from Deinococcus radiodurans (strain ATCC 13939 / DSM 20539 / JCM 16871 / CCUG 27074 / LMG 4051 / NBRC 15346 / NCIMB 9279 / VKM B-1422 / R1).